We begin with the raw amino-acid sequence, 547 residues long: Chaperonin GroEL (547 aa).

ATP is bound by residues Thr-30 to Pro-33, Lys-51, Asp-87 to Thr-91, Gly-415, Asn-479 to Ala-481, and Asp-495. The interval Ala-524–Phe-547 is disordered. The segment covering Ala-535–Phe-547 has biased composition (gly residues).

It belongs to the chaperonin (HSP60) family. As to quaternary structure, forms a cylinder of 14 subunits composed of two heptameric rings stacked back-to-back. Interacts with the co-chaperonin GroES.

It localises to the cytoplasm. It carries out the reaction ATP + H2O + a folded polypeptide = ADP + phosphate + an unfolded polypeptide.. Together with its co-chaperonin GroES, plays an essential role in assisting protein folding. The GroEL-GroES system forms a nano-cage that allows encapsulation of the non-native substrate proteins and provides a physical environment optimized to promote and accelerate protein folding. The protein is Chaperonin GroEL of Xylella fastidiosa (strain M23).